The sequence spans 142 residues: SPbeta prophage-derived deoxyuridine 5'-triphosphate nucleotidohydrolase YosS (142 aa).

Residues Ser-62 and Asn-74 each coordinate dUMP. Asp-80 functions as the Proton acceptor in the catalytic mechanism. Residues Tyr-83 and Phe-91 each coordinate dUMP.

It belongs to the dUTPase family. Homotrimer. Mg(2+) serves as cofactor.

It catalyses the reaction dUTP + H2O = dUMP + diphosphate + H(+). The protein operates within pyrimidine metabolism; dUMP biosynthesis; dUMP from dCTP (dUTP route): step 2/2. Involved in nucleotide metabolism: produces dUMP, the immediate precursor of thymidine nucleotides and decreases the intracellular concentration of dUTP, so that uracil cannot be incorporated into DNA. The Ser-62 side chain changes its position upon ligand-binding to make contacts with the nucleotide phosphates. The chain is SPbeta prophage-derived deoxyuridine 5'-triphosphate nucleotidohydrolase YosS from Bacillus subtilis (strain 168).